Here is a 602-residue protein sequence, read N- to C-terminus: 3-hydroxy-3-methylglutaryl-coenzyme A reductase 2 (602 aa).

The next 2 helical transmembrane spans lie at 44–67 (ASDA…FFSV) and 95–115 (AIVS…IGFV). The interval 116-187 (QTFVSRGNND…PLITSASSGE (72 aa)) is linker. N124 carries an N-linked (GlcNAc...) asparagine glycan. The segment at 188–602 (DEEIIKSVVQ…STKDVTKASS (415 aa)) is catalytic. The Charge relay system role is filled by E281. N345 carries N-linked (GlcNAc...) asparagine glycosylation. The Charge relay system role is filled by K413. N458 carries an N-linked (GlcNAc...) asparagine glycan. The active-site Charge relay system is the D489. Residue H587 is the Proton donor of the active site. Residue N591 is glycosylated (N-linked (GlcNAc...) asparagine).

Belongs to the HMG-CoA reductase family.

The protein resides in the endoplasmic reticulum membrane. The catalysed reaction is (R)-mevalonate + 2 NADP(+) + CoA = (3S)-3-hydroxy-3-methylglutaryl-CoA + 2 NADPH + 2 H(+). The protein operates within metabolic intermediate biosynthesis; (R)-mevalonate biosynthesis; (R)-mevalonate from acetyl-CoA: step 3/3. In terms of biological role, catalyzes the synthesis of mevalonate. The specific precursor of all isoprenoid compounds present in plants. This chain is 3-hydroxy-3-methylglutaryl-coenzyme A reductase 2 (HMG2), found in Solanum lycopersicum (Tomato).